A 183-amino-acid polypeptide reads, in one-letter code: Oligoribonuclease (183 aa).

Residues 8–171 form the Exonuclease domain; the sequence is LIWLDLEMTG…QDIRDSIEEL (164 aa). Residue Y129 is part of the active site.

Belongs to the oligoribonuclease family.

The protein localises to the cytoplasm. In terms of biological role, 3'-to-5' exoribonuclease specific for small oligoribonucleotides. This Coxiella burnetii (strain RSA 493 / Nine Mile phase I) protein is Oligoribonuclease.